The chain runs to 228 residues: Cytidylate kinase (228 aa).

17 to 25 serves as a coordination point for ATP; sequence GPTASGKGT.

Belongs to the cytidylate kinase family. Type 1 subfamily.

The protein localises to the cytoplasm. It catalyses the reaction CMP + ATP = CDP + ADP. It carries out the reaction dCMP + ATP = dCDP + ADP. The chain is Cytidylate kinase from Burkholderia ambifaria (strain ATCC BAA-244 / DSM 16087 / CCUG 44356 / LMG 19182 / AMMD) (Burkholderia cepacia (strain AMMD)).